A 244-amino-acid chain; its full sequence is Heat stress transcription factor B-3 (244 aa).

Residues 38-132 (PPPFLVKTYK…LMSNIRRRKS (95 aa)) mediate DNA binding. A hydrophobic repeat HR-A/B region spans residues 173–218 (TSSSFVYTALLDENKCLKNENELLSCELGKTKKKCKQLMELVERYR). The Nuclear localization signal motif lies at 202–208 (KTKKKCK). The tract at residues 216 to 244 (RYRGEDEDATDESDDEEDEGLKLFGVKLE) is disordered. Acidic residues predominate over residues 220-234 (EDEDATDESDDEEDE). A Nuclear export signal motif is present at residues 236–243 (LKLFGVKL).

The protein belongs to the HSF family. Class B subfamily. As to quaternary structure, homotrimer. In terms of processing, exhibits temperature-dependent phosphorylation.

The protein resides in the cytoplasm. The protein localises to the nucleus. Transcriptional regulator that specifically binds DNA sequence 5'-AGAAnnTTCT-3' known as heat shock promoter elements (HSE). In Arabidopsis thaliana (Mouse-ear cress), this protein is Heat stress transcription factor B-3 (HSFB3).